The sequence spans 618 residues: Sphingomyelin phosphodiesterase 2 (618 aa).

The signal sequence occupies residues 1–22 (MQQPLIILGIGIVLALVSNVES). The 84-residue stretch at 68-151 (RKMSCLFCTF…AFIANCGHSD (84 aa)) folds into the Saposin B-type domain. Disulfide bonds link Cys72/Cys147, Cys75/Cys140, and Cys103/Cys114. N-linked (GlcNAc...) asparagine glycosylation is present at Asn89. The N-linked (GlcNAc...) asparagine glycan is linked to Asn159. Asp189 and His191 together coordinate Zn(2+). Intrachain disulfides connect Cys204–Cys216 and Cys217–Cys249. Zn(2+) is bound at residue Asp278. Asn298 carries N-linked (GlcNAc...) asparagine glycosylation. Zn(2+)-binding residues include Asn318, His427, His461, and His463. A disulfide bridge connects residues Cys387 and Cys435. Asn525 and Asn568 each carry an N-linked (GlcNAc...) asparagine glycan. 2 disulfide bridges follow: Cys588–Cys594 and Cys600–Cys613.

This sequence belongs to the acid sphingomyelinase family. It depends on Zn(2+) as a cofactor.

The protein resides in the secreted. It carries out the reaction a sphingomyelin + H2O = phosphocholine + an N-acylsphing-4-enine + H(+). The enzyme catalyses an N-acyl-15-methylhexadecasphing-4-enine-1-phosphocholine + H2O = an N-acyl-15-methylhexadecasphing-4-enine + phosphocholine + H(+). It functions in the pathway lipid metabolism; sphingolipid metabolism. In terms of biological role, sphingomyelin phosphodiesterase (sphingomyelinase) that converts sphingomyelin (N-acyl-sphingoid-1-phosphocholine) to ceramide (N-acyl-sphingoid base) and phosphocholine at acidic pH. Displays its enzymatic activity when secreted. May play distinct roles in signaling. The sequence is that of Sphingomyelin phosphodiesterase 2 (asm-2) from Caenorhabditis elegans.